The sequence spans 257 residues: uncharacterized protein (257 aa).

A Phosphoserine modification is found at Ser127. Disordered stretches follow at residues 146–174 and 210–231; these read HEDP…EDDG and AREK…RREK. Polar residues predominate over residues 151-160; it reads PSSTYNSSIS. The stretch at 196–257 forms a coiled coil; it reads HVRMVREVHE…QQQQEDEQKT (62 aa).

This is an uncharacterized protein from Arabidopsis thaliana (Mouse-ear cress).